Here is a 104-residue protein sequence, read N- to C-terminus: Probable quinol monooxygenase YgiN (104 aa).

The ABM domain occupies 2 to 100 (LTVIAEIRTR…DVLEMNIRIL (99 aa)).

In terms of assembly, homodimer.

The catalysed reaction is menadiol + 2 O2 = menadione + 2 superoxide + 2 H(+). Can oxidize menadiol to menadione. The sequence is that of Probable quinol monooxygenase YgiN (ygiN) from Escherichia coli O157:H7.